Reading from the N-terminus, the 128-residue chain is Large ribosomal subunit protein eL8 (128 aa).

The protein belongs to the eukaryotic ribosomal protein eL8 family. As to quaternary structure, part of the 50S ribosomal subunit. Probably part of the RNase P complex.

The protein resides in the cytoplasm. Multifunctional RNA-binding protein that recognizes the K-turn motif in ribosomal RNA, the RNA component of RNase P, box H/ACA, box C/D and box C'/D' sRNAs. The protein is Large ribosomal subunit protein eL8 of Staphylothermus marinus (strain ATCC 43588 / DSM 3639 / JCM 9404 / F1).